Reading from the N-terminus, the 201-residue chain is Sorting nexin-10 (201 aa).

Positions 8–125 (EEFVSVWVRD…SLHLFLQSHL (118 aa)) are required for interaction with ATP6V1D. One can recognise a PX domain in the interval 10 to 127 (FVSVWVRDPR…HLFLQSHLNS (118 aa)). 3 residues coordinate a 1,2-diacyl-sn-glycero-3-phospho-(1D-myo-inositol-3-phosphate): arginine 53, lysine 79, and arginine 94. A disordered region spans residues 155 to 201 (RFPEEEEEGKKDADVEYDSESSSSGLGHSSDDSSSHGCKTSPALQES).

This sequence belongs to the sorting nexin family. Interacts with ATP6V1D; may play a role in ciliogenesis. Expressed in femur, calvariae and teeth.

It localises to the cytoplasm. Its subcellular location is the endosome membrane. The protein resides in the cytoskeleton. It is found in the microtubule organizing center. The protein localises to the centrosome. Functionally, probable phosphoinositide-binding protein involved in protein sorting and membrane trafficking in endosomes. Plays a role in cilium biogenesis through regulation of the transport and the localization of proteins to the cilium. Required for the localization to the cilium of V-ATPase subunit ATP6V1D and ATP6V0D1, and RAB8A. Involved in osteoclast differentiation and therefore bone resorption. The polypeptide is Sorting nexin-10 (Snx10) (Mus musculus (Mouse)).